Reading from the N-terminus, the 247-residue chain is Cell division protein ZapD (247 aa).

This sequence belongs to the ZapD family. Interacts with FtsZ.

The protein resides in the cytoplasm. Functionally, cell division factor that enhances FtsZ-ring assembly. Directly interacts with FtsZ and promotes bundling of FtsZ protofilaments, with a reduction in FtsZ GTPase activity. The sequence is that of Cell division protein ZapD from Shigella dysenteriae serotype 1 (strain Sd197).